A 267-amino-acid polypeptide reads, in one-letter code: uncharacterized protein (267 aa).

The stretch at 50 to 90 is one WD repeat; that stretch reads PGLNAVTASKFSPDGRWLLNIADGSGYVQLWDTAKGERVKT.

This is an uncharacterized protein from Deinococcus radiodurans (strain ATCC 13939 / DSM 20539 / JCM 16871 / CCUG 27074 / LMG 4051 / NBRC 15346 / NCIMB 9279 / VKM B-1422 / R1).